A 486-amino-acid chain; its full sequence is Transcription factor bHLH49 (486 aa).

Residues 1 to 17 (MDLSAKDEFSAEKRNPD) are compositionally biased toward basic and acidic residues. Disordered regions lie at residues 1–30 (MDLS…GDWR) and 194–300 (KEST…KDGY). Composition is skewed to polar residues over residues 198–221 (VRSS…TQSS) and 243–254 (QKNSEAAQSHRS). The segment covering 273 to 293 (QSPNSPGKKSNSGKQQGKQSS) has biased composition (low complexity). The bHLH domain maps to 309–359 (QATNSHSLAERVRREKISERMKFLQDLVPGCNKVTGKAVMLDEIINYVQSL).

Homodimer. Interacts with IBH1. In terms of tissue distribution, expressed constitutively in roots, stems, and flowers.

The protein localises to the nucleus. Functionally, transcriptional activator involved in cell elongation. Regulates the expression of a subset of genes involved in cell expansion by binding to the G-box motif. The chain is Transcription factor bHLH49 (BHLH49) from Arabidopsis thaliana (Mouse-ear cress).